We begin with the raw amino-acid sequence, 344 residues long: Probable dual-specificity RNA methyltransferase RlmN (344 aa).

Glu92 acts as the Proton acceptor in catalysis. The region spanning 98 to 325 (DEDRATLCVS…TTIRASRGED (228 aa)) is the Radical SAM core domain. Cys105 and Cys330 are disulfide-bonded. [4Fe-4S] cluster is bound by residues Cys112, Cys116, and Cys119. Residues 157–158 (GE), Ser189, 211–213 (SLH), and His287 each bind S-adenosyl-L-methionine. Cys330 serves as the catalytic S-methylcysteine intermediate.

This sequence belongs to the radical SAM superfamily. RlmN family. The cofactor is [4Fe-4S] cluster.

The protein resides in the cytoplasm. The catalysed reaction is adenosine(2503) in 23S rRNA + 2 reduced [2Fe-2S]-[ferredoxin] + 2 S-adenosyl-L-methionine = 2-methyladenosine(2503) in 23S rRNA + 5'-deoxyadenosine + L-methionine + 2 oxidized [2Fe-2S]-[ferredoxin] + S-adenosyl-L-homocysteine. The enzyme catalyses adenosine(37) in tRNA + 2 reduced [2Fe-2S]-[ferredoxin] + 2 S-adenosyl-L-methionine = 2-methyladenosine(37) in tRNA + 5'-deoxyadenosine + L-methionine + 2 oxidized [2Fe-2S]-[ferredoxin] + S-adenosyl-L-homocysteine. In terms of biological role, specifically methylates position 2 of adenine 2503 in 23S rRNA and position 2 of adenine 37 in tRNAs. In Bacteroides fragilis (strain ATCC 25285 / DSM 2151 / CCUG 4856 / JCM 11019 / LMG 10263 / NCTC 9343 / Onslow / VPI 2553 / EN-2), this protein is Probable dual-specificity RNA methyltransferase RlmN.